Reading from the N-terminus, the 574-residue chain is VAO-type flavoprotein oxidase VAO615 (574 aa).

Residues 1–17 form the signal peptide; it reads MPASLLRFLALAGTAVG. Disulfide bonds link cysteine 28–cysteine 572, cysteine 64–cysteine 77, cysteine 108–cysteine 118, and cysteine 450–cysteine 476. Asparagine 47 carries N-linked (GlcNAc...) asparagine glycosylation. Asparagine 105 carries an N-linked (GlcNAc...) asparagine glycan. The FAD-binding PCMH-type domain occupies 120 to 299; it reads LGNYPSYVVN…LSMTARLHRD (180 aa). Residues asparagine 129, asparagine 211, asparagine 310, asparagine 346, and asparagine 438 are each glycosylated (N-linked (GlcNAc...) asparagine). Residues 157 to 222 constitute a cross-link (6-(S-cysteinyl)-8alpha-(pros-histidyl)-FAD (His-Cys)); it reads HDYLGKSTGK…TGHRIVGGTC (66 aa).

Belongs to the oxygen-dependent FAD-linked oxidoreductase family. It depends on FAD as a cofactor. In terms of processing, the FAD cofactor is bound via a bicovalent 6-S-cysteinyl, 8alpha-N1-histidyl FAD linkage.

The protein resides in the secreted. In terms of biological role, probably oxidoreductase that, when reduced, rapidly reacts with molecular oxygen, a hallmark of flavoprotein oxidases. A large panel of alcohols, including carbohydrates, steroids and secondary alcohols were tested as potential substrates, but none has been identified so far. The protein is VAO-type flavoprotein oxidase VAO615 of Thermothelomyces thermophilus (strain ATCC 42464 / BCRC 31852 / DSM 1799) (Sporotrichum thermophile).